The sequence spans 255 residues: Flap endonuclease Xni (255 aa).

Residue Asp105 participates in Mg(2+) binding. A 5'-3' exonuclease domain is found at 162 to 254; it reads EHKQFIDYLA…LKQFRLPKAN (93 aa). The K(+) site is built by Leu172, Ala173, Pro181, Val183, and Ile186. Residues 185 to 190 form an interaction with DNA region; the sequence is GIGPKS.

The protein belongs to the Xni family. Mg(2+) serves as cofactor. It depends on K(+) as a cofactor.

Its function is as follows. Has flap endonuclease activity. During DNA replication, flap endonucleases cleave the 5'-overhanging flap structure that is generated by displacement synthesis when DNA polymerase encounters the 5'-end of a downstream Okazaki fragment. This is Flap endonuclease Xni from Shewanella piezotolerans (strain WP3 / JCM 13877).